The chain runs to 420 residues: Beta-arrestin-2 (420 aa).

Position 48 is a phosphotyrosine (Tyr-48). Residues Pro-176 and Pro-181 each carry the hydroxyproline; by PHD2 modification. Residues 240 to 409 (ADICLFSTAQ…EDFARLRLKG (170 aa)) are interaction with TRAF6. Residue Ser-360 is modified to Phosphoserine. The interval 374-420 (PETDAPVDTNLIEFETNYATDDDIVFEDFARLRLKGLKDEDYDDQFC) is interaction with AP2B1. Thr-393 is modified (phosphothreonine). A [DE]-X(1,2)-F-X-X-[FL]-X-X-X-R motif motif is present at residues 396 to 406 (DIVFEDFARLR).

Belongs to the arrestin family. In terms of assembly, homooligomer; the self-association is mediated by InsP6-binding. Heterooligomer with ARRB1; the association is mediated by InsP6-binding. Interacts with ADRB2 and CHRM2. Interacts with PDE4A. Interacts with PDE4D. Interacts with MAPK10, MAPK1 and MAPK3. Interacts with DRD2. Interacts with FSHR. Interacts with CLTC. Interacts with HTR2C. Interacts with CRR5. Interacts with CXCR4. Interacts with SRC. Interacts with DUSP16; the interaction is interrupted by stimulation of AGTR1 and activation of MAPK10. Interacts with CHUK; the interaction is enhanced stimulation of ADRB2. Interacts with RELA. Interacts with MDM2; the interaction is enhanced by activation of GPCRs. Interacts with SLC9A5. Interacts with TRAF6. Interacts with IGF1R. Interacts with ENG. Interacts with KIR2DL1, KIR2DL3 and KIR2DL4. Interacts with LDLR. Interacts with AP2B1. Interacts with C5AR1. Interacts with RAF1. Interacts with MAP2K1. Interacts with MAPK1. Interacts with MAPK10; the interaction enhances MAPK10 activation by MAP3K5. Interacts with MAP2K4; the interaction is enhanced by presence of MAP3K5 and MAPK10. Interacts with MAP3K5. Interacts with AKT1. Interacts with IKBKB and MAP3K14. Interacts with SMO (activated). Interacts with GSK3A and GSK3B. Associates with protein phosphatase 2A (PP2A). Interacts with CXCR4; the interaction is dependent on C-terminal phosphorylation of CXCR4 and allows activation of MAPK1 and MAPK3. Interacts with GPR143. Interacts with HCK and CXCR1 (phosphorylated). Interacts with ACKR3 and ACKR4. Interacts with ARRDC1; the interaction is direct. Interacts with GPR61, GPR62 and GPR135. Interacts (via NACHT and LRR domains) with NLRP3; this interaction is direct and inducible by omega-3 polyunsaturated fatty acids (PUFAs). Interacts with FFAR4 (via C-terminus); this interaction is stimulated by long-chain fatty acids (LCFAs). Interacts with GPR35. Interacts with GPR84. Interacts with TIGIT; this interaction inhibits the NF-kappa-B pathway. Interacts with TGFBR3. Post-translationally, phosphorylated at Thr-382 in the cytoplasm; probably dephosphorylated at the plasma membrane. The phosphorylation does not regulate internalization and recycling of ADRB2, interaction with clathrin or AP2B1. The ubiquitination status appears to regulate the formation and trafficking of beta-arrestin-GPCR complexes and signaling. Ubiquitination appears to occur GPCR-specific. Ubiquitinated by MDM2; the ubiquitination is required for rapid internalization of ADRB2. Deubiquitinated by USP33; the deubiquitination leads to a dissociation of the beta-arrestin-GPCR complex. Stimulation of a class A GPCR, such as ADRB2, induces transient ubiquitination and subsequently promotes association with USP33. Stimulation of a class B GPCR promotes a sustained ubiquitination. Deubiquitinated by USP20; allowing USP20 to deubiquitinate TRAF6 leading to inhibition of NF-kappa-B signaling. In terms of processing, hydroxylation by PHD2 modulates the rate of internalization by slowing down recruitment to the plasma membrane and inhibiting subsequent co-internalization with class A receptors. As to expression, found in a variety of tissues. The short isoform is the most abundant form in all tissues.

The protein localises to the cytoplasm. Its subcellular location is the nucleus. The protein resides in the cell membrane. It localises to the membrane. It is found in the clathrin-coated pit. The protein localises to the cytoplasmic vesicle. Functionally, functions in regulating agonist-mediated G-protein coupled receptor (GPCR) signaling by mediating both receptor desensitization and resensitization processes. During homologous desensitization, beta-arrestins bind to the GPRK-phosphorylated receptor and sterically preclude its coupling to the cognate G-protein; the binding appears to require additional receptor determinants exposed only in the active receptor conformation. The beta-arrestins target many receptors for internalization by acting as endocytic adapters (CLASPs, clathrin-associated sorting proteins) and recruiting the GPRCs to the adapter protein 2 complex 2 (AP-2) in clathrin-coated pits (CCPs). However, the extent of beta-arrestin involvement appears to vary significantly depending on the receptor, agonist and cell type. Internalized arrestin-receptor complexes traffic to intracellular endosomes, where they remain uncoupled from G-proteins. Two different modes of arrestin-mediated internalization occur. Class A receptors, like ADRB2, OPRM1, ENDRA, D1AR and ADRA1B dissociate from beta-arrestin at or near the plasma membrane and undergo rapid recycling. Class B receptors, like AVPR2, AGTR1, NTSR1, TRHR and TACR1 internalize as a complex with arrestin and traffic with it to endosomal vesicles, presumably as desensitized receptors, for extended periods of time. Receptor resensitization then requires that receptor-bound arrestin is removed so that the receptor can be dephosphorylated and returned to the plasma membrane. Mediates endocytosis of CCR7 following ligation of CCL19 but not CCL21. Involved in internalization of P2RY1, P2RY4, P2RY6 and P2RY11 and ATP-stimulated internalization of P2RY2. Involved in phosphorylation-dependent internalization of OPRD1 and subsequent recycling or degradation. Involved in ubiquitination of IGF1R. Beta-arrestins function as multivalent adapter proteins that can switch the GPCR from a G-protein signaling mode that transmits short-lived signals from the plasma membrane via small molecule second messengers and ion channels to a beta-arrestin signaling mode that transmits a distinct set of signals that are initiated as the receptor internalizes and transits the intracellular compartment. Acts as a signaling scaffold for MAPK pathways such as MAPK1/3 (ERK1/2) and MAPK10 (JNK3). ERK1/2 and JNK3 activated by the beta-arrestin scaffold are largely excluded from the nucleus and confined to cytoplasmic locations such as endocytic vesicles, also called beta-arrestin signalosomes. Acts as a signaling scaffold for the AKT1 pathway. GPCRs for which the beta-arrestin-mediated signaling relies on both ARRB1 and ARRB2 (codependent regulation) include ADRB2, F2RL1 and PTH1R. For some GPCRs the beta-arrestin-mediated signaling relies on either ARRB1 or ARRB2 and is inhibited by the other respective beta-arrestin form (reciprocal regulation). Increases ERK1/2 signaling in AGTR1- and AVPR2-mediated activation (reciprocal regulation). Involved in CCR7-mediated ERK1/2 signaling involving ligand CCL19. Is involved in type-1A angiotensin II receptor/AGTR1-mediated ERK activity. Is involved in type-1A angiotensin II receptor/AGTR1-mediated MAPK10 activity. Is involved in dopamine-stimulated AKT1 activity in the striatum by disrupting the association of AKT1 with its negative regulator PP2A. Involved in AGTR1-mediated chemotaxis. Appears to function as signaling scaffold involved in regulation of MIP-1-beta-stimulated CCR5-dependent chemotaxis. Involved in attenuation of NF-kappa-B-dependent transcription in response to GPCR or cytokine stimulation by interacting with and stabilizing CHUK. Suppresses UV-induced NF-kappa-B-dependent activation by interacting with CHUK. The function is promoted by stimulation of ADRB2 and dephosphorylation of ARRB2. Involved in p53/TP53-mediated apoptosis by regulating MDM2 and reducing the MDM2-mediated degradation of p53/TP53. May serve as nuclear messenger for GPCRs. Upon stimulation of OR1D2, may be involved in regulation of gene expression during the early processes of fertilization. Also involved in regulation of receptors other than GPCRs. Involved in endocytosis of TGFBR2 and TGFBR3 and down-regulates TGF-beta signaling such as NF-kappa-B activation. Involved in endocytosis of low-density lipoprotein receptor/LDLR. Involved in endocytosis of smoothened homolog/Smo, which also requires GRK2. Involved in endocytosis of SLC9A5. Involved in endocytosis of ENG and subsequent TGF-beta-mediated ERK activation and migration of epithelial cells. Involved in Toll-like receptor and IL-1 receptor signaling through the interaction with TRAF6 which prevents TRAF6 autoubiquitination and oligomerization required for activation of NF-kappa-B and JUN. Involved in insulin resistance by acting as insulin-induced signaling scaffold for SRC, AKT1 and INSR. Involved in regulation of inhibitory signaling of natural killer cells by recruiting PTPN6 and PTPN11 to KIR2DL1. Involved in IL8-mediated granule release in neutrophils. Involved in the internalization of the atypical chemokine receptor ACKR3. Acts as an adapter protein coupling FFAR4 receptor to specific downstream signaling pathways, as well as mediating receptor endocytosis. During the activation step of NLRP3 inflammasome, directly associates with NLRP3 leading to inhibition of pro-inflammatory cytokine release and inhibition of inflammation. In Bos taurus (Bovine), this protein is Beta-arrestin-2 (ARRB2).